The following is a 401-amino-acid chain: Calcium-responsive transcription coactivator (401 aa).

The N-terminal auto-inhibitory domain; necessary for interaction with SMARCA4/BRG1 stretch occupies residues 1–148 (MSVAFASARP…TLPTTSMSMS (148 aa)). Residues 50–53 (YQQI) carry the SH2-binding motif. 2 disordered regions span residues 72 to 171 (QSLL…VPMQ) and 214 to 401 (TRAR…NYQQ). The span at 85–106 (LGPGALSQSGSSQGLHPQGSLS) shows a compositional bias: low complexity. Over residues 128-137 (NHVSMQQTAQ) the composition is skewed to polar residues. Positions 138–149 (STLPTTSMSMSG) are enriched in low complexity. The segment at 149–237 (GSGHGTGPGY…GGSMMGQRPM (89 aa)) is methionine-rich intra-molecular domain. Residues 251–322 (YLGQEEYYSE…SQYSQQQAGY (72 aa)) form an MFD domain region. Composition is skewed to polar residues over residues 260 to 276 (EQYS…SQQY) and 285 to 294 (AYQQSSYTEQ). Basic and acidic residues predominate over residues 295-304 (SYDRSFEDPT). Residues 310-374 (GGNSQYSQQQ…QGQGQQYGSY (65 aa)) show a composition bias toward low complexity. The interval 339-401 (NQQSYPGQQQ…EQGQYGNYQQ (63 aa)) is necessary for nuclear localization. The short motif at 358 to 361 (SQYS) is the SH2-binding element. Residues 375-387 (RTSQTGPSAQQQR) are compositionally biased toward polar residues. An SH3-binding motif is present at residues 376–384 (TSQTGPSAQ). Residues 389–401 (YGYEQGQYGNYQQ) show a composition bias toward low complexity. The segment at 392–401 (EQGQYGNYQQ) is necessary for interaction with CREBBP and for the recruitment of CREBBP to the nuclear bodies. The SH2-binding motif lies at 396–399 (YGNY).

The protein belongs to the SS18 family. In terms of assembly, homodimer. Dimerization may be necessary for its function in neuronal dendritic development. Interacts (via C-terminus) with CREBBP (via N-terminus), EP300 and SMARCA4/BRG1. Interacts with the nBAF complex. Association with CREBBP facilitates transcription while the association with SMARCA4/BRG1 suppresses CREST-mediated transcription in resting neurons. In terms of tissue distribution, brain (at protein level). Also found in the heart, liver, kidney and testis.

The protein localises to the nucleus. It localises to the chromosome. Its subcellular location is the centromere. The protein resides in the kinetochore. Functionally, transcriptional activator which is required for calcium-dependent dendritic growth and branching in cortical neurons. Recruits CREB-binding protein (CREBBP) to nuclear bodies. Component of the CREST-BRG1 complex, a multiprotein complex that regulates promoter activation by orchestrating a calcium-dependent release of a repressor complex and a recruitment of an activator complex. In resting neurons, transcription of the c-FOS promoter is inhibited by BRG1-dependent recruitment of a phospho-RB1-HDAC1 repressor complex. Upon calcium influx, RB1 is dephosphorylated by calcineurin, which leads to release of the repressor complex. At the same time, there is increased recruitment of CREBBP to the promoter by a CREST-dependent mechanism, which leads to transcriptional activation. The CREST-BRG1 complex also binds to the NR2B promoter, and activity-dependent induction of NR2B expression involves a release of HDAC1 and recruitment of CREBBP. The chain is Calcium-responsive transcription coactivator (Ss18l1) from Rattus norvegicus (Rat).